The sequence spans 207 residues: Alpha-1-acid glycoprotein 2 (207 aa).

The first 18 residues, 1 to 18 (MALHMILVMVSLLPLLEA), serve as a signal peptide directing secretion. Gln-19 is subject to Pyrrolidone carboxylic acid. 5 N-linked (GlcNAc...) asparagine glycosylation sites follow: Asn-25, Asn-34, Asn-76, Asn-94, and Asn-104. A disulfide bridge links Cys-91 with Cys-184. The disordered stretch occupies residues 188–207 (EKQQLELEKETKKDPEEGQA).

Belongs to the calycin superfamily. Lipocalin family. As to expression, expressed by the liver and secreted in plasma.

It is found in the secreted. Functionally, functions as a transport protein in the blood stream. Binds various ligands in the interior of its beta-barrel domain. Appears to function in modulating the activity of the immune system during the acute-phase reaction. The sequence is that of Alpha-1-acid glycoprotein 2 (Orm2) from Mus musculus (Mouse).